Reading from the N-terminus, the 185-residue chain is MKIIAGLGNPGQKYDKTKHNTGFMTLDHYLNEKGLSLDKDKFEGHWTKQKINGEDVILLEPQTYMNESGRSVSQIANFFKVAPEDVLIIQDDMDMPIGKIRIRANGKSGGHNGIKSIIRDLGTEKFNRLKIGIRHPKNTTVVSWVLTPFNDEQQKLMDDAFDTSVKIIDDFIAGRDSQYLMNKYN.

Residue Y14 coordinates tRNA. Residue H19 is the Proton acceptor of the active site. TRNA-binding residues include Y64, N66, and N112.

It belongs to the PTH family. In terms of assembly, monomer.

Its subcellular location is the cytoplasm. It catalyses the reaction an N-acyl-L-alpha-aminoacyl-tRNA + H2O = an N-acyl-L-amino acid + a tRNA + H(+). In terms of biological role, hydrolyzes ribosome-free peptidyl-tRNAs (with 1 or more amino acids incorporated), which drop off the ribosome during protein synthesis, or as a result of ribosome stalling. Its function is as follows. Catalyzes the release of premature peptidyl moieties from peptidyl-tRNA molecules trapped in stalled 50S ribosomal subunits, and thus maintains levels of free tRNAs and 50S ribosomes. This Lactobacillus helveticus (strain DPC 4571) protein is Peptidyl-tRNA hydrolase.